Here is a 415-residue protein sequence, read N- to C-terminus: 3-isopropylmalate dehydratase large subunit (415 aa).

Residues C295, C353, and C356 each coordinate [4Fe-4S] cluster.

The protein belongs to the aconitase/IPM isomerase family. LeuC type 2 subfamily. As to quaternary structure, heterodimer of LeuC and LeuD. Requires [4Fe-4S] cluster as cofactor.

The enzyme catalyses (2R,3S)-3-isopropylmalate = (2S)-2-isopropylmalate. The protein operates within amino-acid biosynthesis; L-leucine biosynthesis; L-leucine from 3-methyl-2-oxobutanoate: step 2/4. Catalyzes the isomerization between 2-isopropylmalate and 3-isopropylmalate, via the formation of 2-isopropylmaleate. In Pyrobaculum neutrophilum (strain DSM 2338 / JCM 9278 / NBRC 100436 / V24Sta) (Thermoproteus neutrophilus), this protein is 3-isopropylmalate dehydratase large subunit.